Reading from the N-terminus, the 325-residue chain is Ribonucleoside-diphosphate reductase subunit beta (325 aa).

Fe cation-binding residues include Asp-73, Glu-104, and His-107. Residue Tyr-111 is part of the active site. Residues Glu-164, Glu-198, and His-201 each contribute to the Fe cation site.

This sequence belongs to the ribonucleoside diphosphate reductase small chain family. As to quaternary structure, tetramer of two alpha and two beta subunits. Requires Fe cation as cofactor.

The catalysed reaction is a 2'-deoxyribonucleoside 5'-diphosphate + [thioredoxin]-disulfide + H2O = a ribonucleoside 5'-diphosphate + [thioredoxin]-dithiol. Functionally, provides the precursors necessary for DNA synthesis. Catalyzes the biosynthesis of deoxyribonucleotides from the corresponding ribonucleotides. The polypeptide is Ribonucleoside-diphosphate reductase subunit beta (nrdF) (Mycobacterium leprae (strain TN)).